The sequence spans 243 residues: Small ribosomal subunit protein uS3 (243 aa).

In terms of domain architecture, KH type-2 spans 39–107 (MRKFVMSELK…ETHLNIVEVR (69 aa)). Residues 214 to 243 (ASERRAMEGDAQGPASRDRDRDRDRRRDNA) form a disordered region. Positions 229 to 243 (SRDRDRDRDRRRDNA) are enriched in basic and acidic residues.

Belongs to the universal ribosomal protein uS3 family. As to quaternary structure, part of the 30S ribosomal subunit. Forms a tight complex with proteins S10 and S14.

Functionally, binds the lower part of the 30S subunit head. Binds mRNA in the 70S ribosome, positioning it for translation. The chain is Small ribosomal subunit protein uS3 from Rhizobium leguminosarum bv. trifolii (strain WSM2304).